A 146-amino-acid chain; its full sequence is MYPAHLLVLLAVCVSLLGAASVPPQPLNLVQFGYLIQCANHGSRATWHYMDYGCYCGAGGSGTPVDDLDRCCKIHDDCYGDAEKKGCSPKMLAYDYYCGENGPYCKNIKKECQRFVCDCDVKAAKCFAGAPYNDANWNIDTTKHCQ.

An N-terminal signal peptide occupies residues 1–19 (MYPAHLLVLLAVCVSLLGA). A propeptide spanning residues 20-27 (ASVPPQPL) is cleaved from the precursor. Cystine bridges form between cysteine 38–cysteine 98, cysteine 54–cysteine 145, cysteine 56–cysteine 72, cysteine 71–cysteine 126, cysteine 78–cysteine 119, cysteine 87–cysteine 112, and cysteine 105–cysteine 117. Ca(2+)-binding residues include tyrosine 55, glycine 57, and glycine 59. Histidine 75 is a catalytic residue. Aspartate 76 provides a ligand contact to Ca(2+). Aspartate 120 is an active-site residue.

Belongs to the phospholipase A2 family. Group I subfamily. D49 sub-subfamily. The cofactor is Ca(2+). Expressed by the venom gland.

The protein resides in the secreted. The enzyme catalyses a 1,2-diacyl-sn-glycero-3-phosphocholine + H2O = a 1-acyl-sn-glycero-3-phosphocholine + a fatty acid + H(+). Functionally, snake venom phospholipase A2 (PLA2) that inhibits collagen-induced platelet aggregation. PLA2 catalyzes the calcium-dependent hydrolysis of the 2-acyl groups in 3-sn-phosphoglycerides. The sequence is that of Phospholipase A2 147 from Drysdalia coronoides (White-lipped snake).